A 270-amino-acid polypeptide reads, in one-letter code: MTQLPPPEQTVLKPAPPELASAPLFDHLEELRRRLILSVVFLAVGMVIAFTYRVQLIELVKVPLTYSELYTTGKVQLVTTKLASQLLLSFNLAFWAGLTLALPFIVWQIWAFIAPGLYPQERRWGLPFILGAGFAFAAGVVFGYKLVLPTMVPFLIEFLAGTVTQMQDLQEYIGTVVTFLVAFGVAFELPILAVILTRLGIVNHTMLRQGWRFALIGIMILAAVITPTPDPANMALVAVPLYALYELGVVLSRVFRVIAPEEQERPAPMS.

Transmembrane regions (helical) follow at residues 35–55, 93–113, 124–144, 176–196, 209–229, and 231–251; these read LILSVVFLAVGMVIAFTYRVQ, AFWAGLTLALPFIVWQIWAFI, WGLPFILGAGFAFAAGVVFGY, VVTFLVAFGVAFELPILAVIL, QGWRFALIGIMILAAVITPTP, and PANMALVAVPLYALYELGVVL.

It belongs to the TatC family. Forms a complex with TatA.

Its subcellular location is the cell membrane. Its function is as follows. Part of the twin-arginine translocation (Tat) system that transports large folded proteins containing a characteristic twin-arginine motif in their signal peptide across membranes. This is Sec-independent protein translocase protein TatC from Deinococcus radiodurans (strain ATCC 13939 / DSM 20539 / JCM 16871 / CCUG 27074 / LMG 4051 / NBRC 15346 / NCIMB 9279 / VKM B-1422 / R1).